The sequence spans 187 residues: Large ribosomal subunit protein uL22A (187 aa).

The protein belongs to the universal ribosomal protein uL22 family. In terms of assembly, component of the large ribosomal subunit (LSU). Mature yeast ribosomes consist of a small (40S) and a large (60S) subunit. The 40S small subunit contains 1 molecule of ribosomal RNA (18S rRNA) and at least 33 different proteins. The large 60S subunit contains 3 rRNA molecules (25S, 5.8S and 5S rRNA) and at least 46 different proteins. uL22 is associated with the polypeptide exit tunnel.

It localises to the cytoplasm. Component of the ribosome, a large ribonucleoprotein complex responsible for the synthesis of proteins in the cell. The small ribosomal subunit (SSU) binds messenger RNAs (mRNAs) and translates the encoded message by selecting cognate aminoacyl-transfer RNA (tRNA) molecules. The large subunit (LSU) contains the ribosomal catalytic site termed the peptidyl transferase center (PTC), which catalyzes the formation of peptide bonds, thereby polymerizing the amino acids delivered by tRNAs into a polypeptide chain. The nascent polypeptides leave the ribosome through a tunnel in the LSU and interact with protein factors that function in enzymatic processing, targeting, and the membrane insertion of nascent chains at the exit of the ribosomal tunnel. This chain is Large ribosomal subunit protein uL22A (rpl1701), found in Schizosaccharomyces pombe (strain 972 / ATCC 24843) (Fission yeast).